The chain runs to 292 residues: ATP synthase gamma chain (292 aa).

The protein belongs to the ATPase gamma chain family. F-type ATPases have 2 components, CF(1) - the catalytic core - and CF(0) - the membrane proton channel. CF(1) has five subunits: alpha(3), beta(3), gamma(1), delta(1), epsilon(1). CF(0) has three main subunits: a, b and c.

Its subcellular location is the cell inner membrane. In terms of biological role, produces ATP from ADP in the presence of a proton gradient across the membrane. The gamma chain is believed to be important in regulating ATPase activity and the flow of protons through the CF(0) complex. The polypeptide is ATP synthase gamma chain (Hyphomonas neptunium (strain ATCC 15444)).